The sequence spans 679 residues: Glycine--tRNA ligase beta subunit (679 aa).

This sequence belongs to the class-II aminoacyl-tRNA synthetase family. As to quaternary structure, tetramer of two alpha and two beta subunits.

It is found in the cytoplasm. It carries out the reaction tRNA(Gly) + glycine + ATP = glycyl-tRNA(Gly) + AMP + diphosphate. This Streptococcus agalactiae serotype Ia (strain ATCC 27591 / A909 / CDC SS700) protein is Glycine--tRNA ligase beta subunit.